Here is a 382-residue protein sequence, read N- to C-terminus: POU domain, class 3, transcription factor 2-A (382 aa).

Disordered stretches follow at residues 69–136 (PWAT…SSNG), 150–206 (GMIN…TPTS), and 348–382 (EKRMTPPGGTIPGAEDIYGASRDTPPHLGVQTSVQ). Residues 122-136 (STGSTHLSSMASSNG) show a composition bias toward polar residues. Positions 165-178 (LRDSHDDHHGDHGH) are enriched in basic and acidic residues. The segment covering 179–194 (QQVSQAQQQHSQLQGG) has biased composition (low complexity). A POU-specific domain is found at 201 to 275 (EDTPTSDDLE…LLNKWLEEAD (75 aa)). Positions 293-352 (KRKKRTSIEVSVKGALESHFLKCPKPSAPEITSLADSLQLEKEVVRVWFCNRRQKEKRMT) form a DNA-binding region, homeobox.

The protein belongs to the POU transcription factor family. Class-3 subfamily. Expressed in the developing brain and spinal cord. Also found in a restricted region of the auditory vesicle during development. In the adult, expression is restricted to the brain.

Its subcellular location is the nucleus. Transcription factor that may be implicated in patterning of the central nervous system during early development. In Xenopus laevis (African clawed frog), this protein is POU domain, class 3, transcription factor 2-A (pou3f2-a).